Here is a 475-residue protein sequence, read N- to C-terminus: Ribulose bisphosphate carboxylase large chain (475 aa).

Positions Met-1–Ser-2 are excised as a propeptide. N-acetylproline is present on Pro-3. An N6,N6,N6-trimethyllysine modification is found at Lys-14. Substrate is bound by residues Asn-123 and Thr-173. Lys-175 serves as the catalytic Proton acceptor. Residue Lys-177 coordinates substrate. Positions 201, 203, and 204 each coordinate Mg(2+). Residue Lys-201 is modified to N6-carboxylysine. His-294 (proton acceptor) is an active-site residue. Arg-295, His-327, and Ser-379 together coordinate substrate.

The protein belongs to the RuBisCO large chain family. Type I subfamily. Heterohexadecamer of 8 large chains and 8 small chains; disulfide-linked. The disulfide link is formed within the large subunit homodimers. Mg(2+) is required as a cofactor. Post-translationally, the disulfide bond which can form in the large chain dimeric partners within the hexadecamer appears to be associated with oxidative stress and protein turnover.

Its subcellular location is the plastid. The protein resides in the chloroplast. The enzyme catalyses 2 (2R)-3-phosphoglycerate + 2 H(+) = D-ribulose 1,5-bisphosphate + CO2 + H2O. It catalyses the reaction D-ribulose 1,5-bisphosphate + O2 = 2-phosphoglycolate + (2R)-3-phosphoglycerate + 2 H(+). Functionally, ruBisCO catalyzes two reactions: the carboxylation of D-ribulose 1,5-bisphosphate, the primary event in carbon dioxide fixation, as well as the oxidative fragmentation of the pentose substrate in the photorespiration process. Both reactions occur simultaneously and in competition at the same active site. This Pelargonium hortorum (Common geranium) protein is Ribulose bisphosphate carboxylase large chain.